Here is a 409-residue protein sequence, read N- to C-terminus: MASGKTTGKTDAPAPVIKLGGPKPPKVGSSGNASWFQALKAKKLNSPPPKFEGSGVPDNENLKLSQQHGYWRRQARYKPGKGGKKSVPDAWYFYYTGTGPAADLNWGDSQDGIVWVSAKGADTKSRSNQGTRDPDKFDQYPLRFSDGGPDGNFRWDFIPINRGRSGRSTAASSAASSRAPSRDGSRGRRSGAEDDLIARAAKIIQDQQKKGSRITKAKADEMAHRRYCKRTIPPGYKVDQVFGPRTKGKEGNFGDDKMNEEGIKDGRVIAMLNLVPSSHACLFGSRVTPKLQPDGLHLRFEFTTVVSRDDPQFDNYVKICDQCVDGVGTRPKDDEPRPKSRPNSRPATRTSSPAPRQQRQKKEKKSKKQDDEVDKALTSDEERNNAQLEFDDEPKVINWGDSALGENEL.

Disordered stretches follow at residues 1-32, 44-63, 120-145, and 164-193; these read MASG…SSGN, LNSP…ENLK, GADT…LRFS, and RSGR…SGAE. Residues 15–31 show a composition bias toward low complexity; it reads PVIKLGGPKPPKVGSSG. The RNA-binding stretch occupies residues 29-160; that stretch reads SSGNASWFQA…GNFRWDFIPI (132 aa). Positions 31–156 constitute a CoV N NTD domain; the sequence is GNASWFQALK…GGPDGNFRWD (126 aa). The segment covering 164-179 has biased composition (low complexity); sequence RSGRSTAASSAASSRA. Residues 180–192 show a composition bias toward basic and acidic residues; sequence PSRDGSRGRRSGA. At S190 the chain carries Phosphoserine; by host. The 117-residue stretch at 215–331 folds into the CoV N CTD domain; that stretch reads TKAKADEMAH…QCVDGVGTRP (117 aa). The dimerization stretch occupies residues 226–333; the sequence is RYCKRTIPPG…VDGVGTRPKD (108 aa). C320 and C323 are disulfide-bonded. Residues 326–409 are disordered; that stretch reads GVGTRPKDDE…GDSALGENEL (84 aa). Residues 341-355 show a composition bias toward polar residues; it reads RPNSRPATRTSSPAP. Residues 358–367 are compositionally biased toward basic residues; it reads QRQKKEKKSK. Positions 368–384 are enriched in basic and acidic residues; it reads KQDDEVDKALTSDEERN. T378 is subject to Phosphothreonine; by host. S379 is modified (phosphoserine; by host).

The protein belongs to the gammacoronavirus nucleocapsid protein family. In terms of assembly, homooligomer. Both monomeric and oligomeric forms interact with RNA. Interacts with protein M. Interacts with NSP3; this interaction serves to tether the genome to the newly translated replicase-transcriptase complex at a very early stage of infection. ADP-ribosylated. The ADP-ribosylation is retained in the virion during infection. Post-translationally, phosphorylated on serine and threonine residues.

It localises to the virion. Its subcellular location is the host endoplasmic reticulum-Golgi intermediate compartment. It is found in the host Golgi apparatus. In terms of biological role, packages the positive strand viral genome RNA into a helical ribonucleocapsid (RNP) and plays a fundamental role during virion assembly through its interactions with the viral genome and membrane protein M. Plays an important role in enhancing the efficiency of subgenomic viral RNA transcription as well as viral replication. This is Nucleoprotein from Avian infectious bronchitis virus (strain H120) (IBV).